Reading from the N-terminus, the 310-residue chain is Choline trimethylamine-lyase activating enzyme (310 aa).

One can recognise a Radical SAM core domain in the interval 17–304; sequence YDGPGVRTLV…EACIRKYDFP (288 aa). [4Fe-4S] cluster is bound by residues cysteine 31, cysteine 35, cysteine 38, cysteine 57, cysteine 60, cysteine 63, and cysteine 99. Residue 37 to 39 participates in S-adenosyl-L-methionine binding; sequence WCS. 2 4Fe-4S ferredoxin-type domains span residues 48-77 and 79-109; these read YQVLYKENLCVHCGACVPVCPAGVHTISAS and LRHGFAEGAQCIGCRRCEDVCPSSALAVVGE. S-adenosyl-L-methionine is bound by residues glycine 139, 188–190, and histidine 264; that span reads DVK.

The protein belongs to the organic radical-activating enzymes family. In terms of assembly, monomer. The cofactor is [4Fe-4S] cluster.

It carries out the reaction glycyl-[protein] + reduced [flavodoxin] + S-adenosyl-L-methionine = glycin-2-yl radical-[protein] + semiquinone [flavodoxin] + 5'-deoxyadenosine + L-methionine + H(+). Its pathway is amine and polyamine metabolism; choline degradation. Catalyzes activation of the choline trimethylamine-lyase CutC under anaerobic conditions by generation of an organic free radical on a glycine residue, via a homolytic cleavage of S-adenosyl-L-methionine (SAM). Is involved in the anaerobic choline utilization pathway that allows D.alaskensis to grow on choline as a source of carbon and energy. In Oleidesulfovibrio alaskensis (strain ATCC BAA-1058 / DSM 17464 / G20) (Desulfovibrio alaskensis), this protein is Choline trimethylamine-lyase activating enzyme.